Reading from the N-terminus, the 133-residue chain is Salivary cystatin-L (133 aa).

Positions 1–19 (MTSTFALVLLLGGMAVCVA) are cleaved as a signal peptide. Positions 30 to 118 (ANHQANPEFL…RTCTTVVFEN (89 aa)) constitute a Cystatin domain. 2 disulfide bridges follow: Cys89/Cys100 and Cys111/Cys130.

This sequence belongs to the cystatin family. As to quaternary structure, monomer. Can form homodimers in vitro, but probably not in vivo. Homodimers are predicted to be inactive; dimerization disrupts the interaction with target proteases. In terms of tissue distribution, detected in saliva (at protein level). Detected in salivary gland and midgut.

The protein localises to the secreted. Its function is as follows. Contributes to the suppression of the host's immune response to tick salivary proteins and is important for successful feeding on hosts. Inhibitor of cysteine proteinases. Inhibits host papain and cathepsin L (CTSL) (in vitro). Inhibits host cathepsin S (CTSS) (in vitro). Inhibits host CTSV and CTSC, but to a lesser degree (in vitro). Inhibits host immune responses via its inhibition of host cathepsins. Inhibits differentiation of host dendritic cells. Inhibits proliferation of host T-cells in response to antigen stimulus. Down-regulates IL1B production by host mast cells, and this then leads to impaired activation of IL1R1, resulting in decreased IL9 production. Inhibits host inflammatory reactions and recruitment of host neutrophils. Attenuates IFN-beta (IFNB1)-triggered JAK/STAT signaling pathway in mouse dendritic cells. (Microbial infection) Down-regulates TLR2-mediated host responses to infection by Borrelia burgdorferi and the production of the chemokine CCL3 by host dendritic cells. Down-regulates host responses to infection by B.burgdorferi and the production of IFNB1 by host dendritic cells. This chain is Salivary cystatin-L, found in Ixodes scapularis (Black-legged tick).